Consider the following 614-residue polypeptide: V-type proton ATPase catalytic subunit A (614 aa).

Residue 247–254 participates in ATP binding; sequence GAFGCGKT.

It belongs to the ATPase alpha/beta chains family. In terms of assembly, V-ATPase is a heteromultimeric enzyme made up of two complexes: the ATP-hydrolytic V1 complex and the proton translocation V0 complex. The V1 complex consists of three catalytic AB heterodimers that form a heterohexamer, three peripheral stalks each consisting of EG heterodimers, one central rotor including subunits D and F, and the regulatory subunits C and H. The proton translocation complex V0 consists of the proton transport subunit a, a ring of proteolipid subunits c9c'', rotary subunit d, subunits e and f, and the accessory subunits VhaAC45 and ATP6AP2.

The catalysed reaction is ATP + H2O + 4 H(+)(in) = ADP + phosphate + 5 H(+)(out). ATP hydrolysis occurs at the interface between the nucleotide-binding domains of subunits A and B. ATP hydrolysis triggers a conformational change in the subunits D and F, which induces a shift of subunit d. The c-ring is subsequently rotated and results in a continuous proton translocation across the membrane. Catalytic subunit of the V1 complex of vacuolar(H+)-ATPase (V-ATPase), a multisubunit enzyme composed of a peripheral complex (V1) that hydrolyzes ATP and a membrane integral complex (V0) that translocates protons. V-ATPase is responsible for acidifying and maintaining the pH of intracellular compartments and in some cell types, is targeted to the plasma membrane, where it is responsible for acidifying the extracellular environment. The chain is V-type proton ATPase catalytic subunit A (VhaA) from Aedes aegypti (Yellowfever mosquito).